We begin with the raw amino-acid sequence, 565 residues long: Polycomb protein EED (565 aa).

WD repeat units follow at residues Asp89–Thr133, Gly136–Pro176, Gly185–Met224, and Ile240–Pro278. The segment at Val417–Phe488 is disordered. Residues Gly429–Asn450 are compositionally biased toward low complexity. Residues His451 to Ser468 show a composition bias toward polar residues. A WD 5 repeat occupies Ile519 to Gly559.

It belongs to the WD repeat ESC family. In terms of assembly, component of the polycomb repressive complex 2 (PRC2) that consists of four core subunits icluding EZH2, EED, SUZ12, and RBBP4, among which EZH2 is the catalytic subunit and which minimally requires EED and SUZ12 for catalysis.

The protein localises to the nucleus. Its function is as follows. Component of the of the Polycomb Repressive Complex 2 (PRC2), a histone H3 lysine methyltransferase responsible for generating mono-, di-, and tri-methylation on Lys27 (H3K27me1, H3K27me2 and H3K27me3). The tri-methylated form is known to be critical in gene repression, and its proper placement is essential in defining repression patterns during development. EED is not a catalytic subunit but is required for the complex regulation of histone H3 lysine methylation by EZH2. This chain is Polycomb protein EED, found in Chaetomium thermophilum (strain DSM 1495 / CBS 144.50 / IMI 039719) (Thermochaetoides thermophila).